Reading from the N-terminus, the 308-residue chain is MSTWTGKRVAVLYGGRSSEREVSLRTGAACADALRQKGHEVVLLDVDLEVAARLRAERVEVAFVALHGRFGEDGSIQGLLESMAIPYTGSGVLASAMGMDKTVSKAIFRSLGLAVADYRVFPRASAGSIGVGDLPFGLPCVVKPAGEGSSVGVHLVNEAAELGPACRDAASHAGDVIVERYVKGTEVDVAVLDGKALGAIEIVPANAFYDYAAKYTAGTTKYFYPARLPEAHVRAVMQAAEAAHRGIGCSGVTRVDFIVAGDGTPYILEVNTLPGMTATSLVPKIAAGLGLSFPDLCERILDGAALKA.

The region spanning 105-302 (KAIFRSLGLA…FPDLCERILD (198 aa)) is the ATP-grasp domain. ATP is bound at residue 133–188 (DLPFGLPCVVKPAGEGSSVGVHLVNEAAELGPACRDAASHAGDVIVERYVKGTEVD). Residues Asp-256, Glu-269, and Asn-271 each contribute to the Mg(2+) site.

This sequence belongs to the D-alanine--D-alanine ligase family. Requires Mg(2+) as cofactor. Mn(2+) serves as cofactor.

It localises to the cytoplasm. It carries out the reaction 2 D-alanine + ATP = D-alanyl-D-alanine + ADP + phosphate + H(+). Its pathway is cell wall biogenesis; peptidoglycan biosynthesis. In terms of biological role, cell wall formation. The chain is D-alanine--D-alanine ligase from Anaeromyxobacter dehalogenans (strain 2CP-1 / ATCC BAA-258).